We begin with the raw amino-acid sequence, 927 residues long: Phospholipase D beta 2 (927 aa).

The C2 domain maps to 104–237 (PFGKASLKVL…YSGARIEGTY (134 aa)). Asp299 provides a ligand contact to Ca(2+). Residues 439–474 (TIYTHHQKNLIVDADAGGNRRKIVAFVGGLDLCDGR) enclose the PLD phosphodiesterase 1 domain. Residues His444, Lys446, and Asp451 contribute to the active site. His444 serves as a coordination point for a 1,2-diacyl-sn-glycero-3-phosphate. Positions 480 and 512 each coordinate Ca(2+). A 1,2-diacyl-sn-glycero-3-phosphate is bound by residues Gln640 and His778. The PLD phosphodiesterase 2 domain maps to 773–800 (FMIYVHSKGMVVDDEYVVIGSANINQRS). Active-site residues include His778, Lys780, and Asp785. A Ca(2+)-binding site is contributed by Glu841.

This sequence belongs to the phospholipase D family. C2-PLD subfamily. Requires Ca(2+) as cofactor. Expressed in stems, and to a lower amount in leaves, flowers and siliques.

The protein resides in the cytoplasm. It is found in the membrane. It carries out the reaction a 1,2-diacyl-sn-glycero-3-phosphocholine + H2O = a 1,2-diacyl-sn-glycero-3-phosphate + choline + H(+). Its activity is regulated as follows. Inhibited by neomycin. In terms of biological role, hydrolyzes glycerol-phospholipids at the terminal phosphodiesteric bond to generate phosphatidic acids (PA). Plays an important role in various cellular processes, including phytohormone action, vesicular trafficking, secretion, cytoskeletal arrangement, meiosis, tumor promotion, pathogenesis, membrane deterioration and senescence. Can use phosphatidylserine or N-acylphosphatidylethanolamine as substrates. The sequence is that of Phospholipase D beta 2 from Arabidopsis thaliana (Mouse-ear cress).